Consider the following 293-residue polypeptide: Diaminopimelate epimerase (293 aa).

Residues N17, Q47, and N67 each coordinate substrate. C76 serves as the catalytic Proton donor. Residues 77–78 (GN), N164, N197, and 215–216 (ER) contribute to the substrate site. The active-site Proton acceptor is the C224. 225 to 226 (GS) is a substrate binding site.

Belongs to the diaminopimelate epimerase family. Homodimer.

It is found in the cytoplasm. It carries out the reaction (2S,6S)-2,6-diaminopimelate = meso-2,6-diaminopimelate. The protein operates within amino-acid biosynthesis; L-lysine biosynthesis via DAP pathway; DL-2,6-diaminopimelate from LL-2,6-diaminopimelate: step 1/1. Functionally, catalyzes the stereoinversion of LL-2,6-diaminopimelate (L,L-DAP) to meso-diaminopimelate (meso-DAP), a precursor of L-lysine and an essential component of the bacterial peptidoglycan. This Rhodopseudomonas palustris (strain TIE-1) protein is Diaminopimelate epimerase.